Here is a 354-residue protein sequence, read N- to C-terminus: UDP-N-acetylglucosamine--N-acetylmuramyl-(pentapeptide) pyrophosphoryl-undecaprenol N-acetylglucosamine transferase (354 aa).

UDP-N-acetyl-alpha-D-glucosamine-binding positions include 15–17, Asn127, Arg163, Ser191, Ile244, 263–268, and Gln288; these read TGG and ALTVSE.

It belongs to the glycosyltransferase 28 family. MurG subfamily.

Its subcellular location is the cell inner membrane. It carries out the reaction di-trans,octa-cis-undecaprenyl diphospho-N-acetyl-alpha-D-muramoyl-L-alanyl-D-glutamyl-meso-2,6-diaminopimeloyl-D-alanyl-D-alanine + UDP-N-acetyl-alpha-D-glucosamine = di-trans,octa-cis-undecaprenyl diphospho-[N-acetyl-alpha-D-glucosaminyl-(1-&gt;4)]-N-acetyl-alpha-D-muramoyl-L-alanyl-D-glutamyl-meso-2,6-diaminopimeloyl-D-alanyl-D-alanine + UDP + H(+). Its pathway is cell wall biogenesis; peptidoglycan biosynthesis. In terms of biological role, cell wall formation. Catalyzes the transfer of a GlcNAc subunit on undecaprenyl-pyrophosphoryl-MurNAc-pentapeptide (lipid intermediate I) to form undecaprenyl-pyrophosphoryl-MurNAc-(pentapeptide)GlcNAc (lipid intermediate II). This chain is UDP-N-acetylglucosamine--N-acetylmuramyl-(pentapeptide) pyrophosphoryl-undecaprenol N-acetylglucosamine transferase, found in Aliivibrio fischeri (strain MJ11) (Vibrio fischeri).